The following is a 316-amino-acid chain: Sideroflexin-4 (316 aa).

Helical transmembrane passes span Gln83 to Ile103, Leu141 to Leu161, Ile174 to Val194, Ile230 to Leu250, and Ile263 to Phe283.

Belongs to the sideroflexin family.

The protein resides in the mitochondrion inner membrane. Functionally, mitochondrial amino-acid transporter. Does not act as a serine transporter: not able to mediate transport of serine into mitochondria. The protein is Sideroflexin-4 of Danio rerio (Zebrafish).